The primary structure comprises 218 residues: Thiopurine S-methyltransferase (218 aa).

Positions 10, 45, 66, and 123 each coordinate S-adenosyl-L-methionine.

Belongs to the class I-like SAM-binding methyltransferase superfamily. TPMT family.

Its subcellular location is the cytoplasm. The catalysed reaction is S-adenosyl-L-methionine + a thiopurine = S-adenosyl-L-homocysteine + a thiopurine S-methylether.. The protein is Thiopurine S-methyltransferase of Shewanella putrefaciens (strain CN-32 / ATCC BAA-453).